A 149-amino-acid polypeptide reads, in one-letter code: Ribonuclease HI (149 aa).

The RNase H type-1 domain maps to 1–140; it reads MIIGYFDGLC…AYELVRRGKL (140 aa). Aspartate 7, glutamate 52, aspartate 76, and aspartate 125 together coordinate Mg(2+). Aspartate 7, glutamate 52, aspartate 76, and aspartate 125 together coordinate Mn(2+). Cysteine 58 and cysteine 145 are oxidised to a cystine.

In terms of assembly, monomer. It depends on Mn(2+) as a cofactor. Mg(2+) is required as a cofactor. Requires Co(2+) as cofactor. The cofactor is Ni(2+). The disulfide bond confers considerable stability to the protein.

It is found in the cytoplasm. The catalysed reaction is Endonucleolytic cleavage to 5'-phosphomonoester.. Nuclease that specifically degrades the RNA of RNA-DNA hybrids. Endonucleolytically removes RNA primers from the Okazaki fragments of lagging strand synthesis on its own. In the presence of Mn(2+) or Co(2+) can also cleave an RNA-RNA hybrid; the dsRNase activity is 10- 100-fold lower than RNase H activity. Complements the temperature-sensitive phenotype of an E.coli double rnhA/rnhB (RNase H) disruption mutant. The polypeptide is Ribonuclease HI (rnhA) (Sulfurisphaera tokodaii (strain DSM 16993 / JCM 10545 / NBRC 100140 / 7) (Sulfolobus tokodaii)).